The chain runs to 431 residues: MERINSINDFNEAKQVIPGGVNSPVRAFRAVGGTPPFIKEAKGSYLVDEDGNRYIDFVQSWGPLLFGHADLDIQKAVEEAIKRGLSFGAPTTSETLLAKEIIALYEGIEKIRFTSSGTEATMSAIRLARGYTGRDDIIKFEGCYHGHSDALLVQAGSGLATFGNPSSPGVPQSFTKHTLLARYNDLESVRECFKKSSGVACVILEPIAGNMGLVPATQEFIQGLRKLCDEQGSVLIFDEVMSGFRASFGGAQALYGVIPDMATFGKVIGGGMPVGAFGGRSDIMACLSPEGAVYQAGTLSGNPVAMAAGIASIRKIKQGGEALFSRLESLALRLMEGFKKCAQKHQIPLQTTVRGSMFGFFFNHAPVSNFEEALQSDTALFAKFHQAMLERGVYLACSQFETGFICASMDESLVDEVIAKIDEALEEIGRG.

K266 carries the post-translational modification N6-(pyridoxal phosphate)lysine.

The protein belongs to the class-III pyridoxal-phosphate-dependent aminotransferase family. HemL subfamily. In terms of assembly, homodimer. Pyridoxal 5'-phosphate serves as cofactor.

The protein resides in the cytoplasm. It catalyses the reaction (S)-4-amino-5-oxopentanoate = 5-aminolevulinate. Its pathway is porphyrin-containing compound metabolism; protoporphyrin-IX biosynthesis; 5-aminolevulinate from L-glutamyl-tRNA(Glu): step 2/2. The protein is Glutamate-1-semialdehyde 2,1-aminomutase of Wolinella succinogenes (strain ATCC 29543 / DSM 1740 / CCUG 13145 / JCM 31913 / LMG 7466 / NCTC 11488 / FDC 602W) (Vibrio succinogenes).